A 175-amino-acid polypeptide reads, in one-letter code: Large ribosomal subunit protein bL9 (175 aa).

Belongs to the bacterial ribosomal protein bL9 family.

Functionally, binds to the 23S rRNA. The protein is Large ribosomal subunit protein bL9 of Orientia tsutsugamushi (strain Boryong) (Rickettsia tsutsugamushi).